A 106-amino-acid chain; its full sequence is Oncosphere antigen B (106 aa).

The region spanning 11–106 (LPQHFRWSQV…QSELRSMCIK (96 aa)) is the Fibronectin type-III domain.

The chain is Oncosphere antigen B (ONCB) from Hydatigena taeniaeformis (Feline tapeworm).